Here is a 461-residue protein sequence, read N- to C-terminus: MLKEYRTVKEVVGPLMLVDQVDGVSFDELVEIELHNGEKRRGKVLEINKDKAMVQLFEGSAGINLKGAKVKFLGKPLELGVSEDMLGRVFDGLGNPKDGGPKIIPDKKLDINGIPINPVARNYPDEFIQTGVSAIDGLNTLVRGQKLPVFSGSGLPHAELAAQIARQAKVLNSDSKFAVVFAAIGTTFEEAQYFIDDFTKTGAIDRAVLFINLANDPAIERIATPRMALTAAEYLAFEKGMHVLVIMTDITNYCEALREVSAARKEVPGRRGYPGYLYTDLSTLYERAGRILGKEGSITQIPILTMPEDDKTHPIPDLTGYITEGQIILSRELYKKGIMPPIDVLPSLSRLKDKGIGKGKTREDHADTMNQLFSAYAQGKQAKELSVILGESALSDTDKLYAKFADAFEEEYVSQGFTTNRTIEETLNLGWKLLTILPKSELKRIRDEYLEKYLSKAEESK.

The protein belongs to the ATPase alpha/beta chains family.

Functionally, produces ATP from ADP in the presence of a proton gradient across the membrane. The V-type beta chain is a regulatory subunit. In Clostridium botulinum (strain Langeland / NCTC 10281 / Type F), this protein is V-type ATP synthase beta chain.